Here is a 382-residue protein sequence, read N- to C-terminus: p21-activated protein kinase-interacting protein 1 (382 aa).

5 WD repeats span residues 37–77, 80–120, 122–160, 202–240, and 243–284; these read THHS…EHGA, HHAG…KTFK, HRGH…SAFI, TNGK…CLCE, and AHEN…KVPP. The segment at 313-382 is disordered; the sequence is LPPAAEPCPD…MSEKKRKKKM (70 aa). Residues 352–363 show a composition bias toward polar residues; that stretch reads DSKQPTKGNSPV. The segment covering 365–382 has biased composition (basic residues); that stretch reads AKKRKMATMSEKKRKKKM.

Interacts with PAK1.

Its subcellular location is the nucleus. It localises to the nucleolus. Functionally, negatively regulates the PAK1 kinase. PAK1 is a member of the PAK kinase family, which has been shown to play a positive role in the regulation of signaling pathways involving MAPK8 and RELA. PAK1 exists as an inactive homodimer, which is activated by binding of small GTPases such as CDC42 to an N-terminal regulatory domain. PAK1IP1 also binds to the N-terminus of PAK1, and inhibits the specific activation of PAK1 by CDC42. May be involved in ribosomal large subunit assembly. The polypeptide is p21-activated protein kinase-interacting protein 1 (Pak1ip1) (Mus musculus (Mouse)).